The primary structure comprises 394 residues: Phosphoglycerate kinase (394 aa).

Substrate contacts are provided by residues 21-23, arginine 37, 60-63, arginine 119, and arginine 152; these read DFN and HLGR. Residues lysine 202, glutamate 324, and 350 to 353 contribute to the ATP site; that span reads GGDS.

It belongs to the phosphoglycerate kinase family. As to quaternary structure, monomer.

It is found in the cytoplasm. It catalyses the reaction (2R)-3-phosphoglycerate + ATP = (2R)-3-phospho-glyceroyl phosphate + ADP. Its pathway is carbohydrate degradation; glycolysis; pyruvate from D-glyceraldehyde 3-phosphate: step 2/5. The polypeptide is Phosphoglycerate kinase (Herpetosiphon aurantiacus (strain ATCC 23779 / DSM 785 / 114-95)).